The primary structure comprises 207 residues: Ribosomal RNA small subunit methyltransferase G (207 aa).

Residues G77, F82, 100–102 (ERS), and R141 each bind S-adenosyl-L-methionine.

Belongs to the methyltransferase superfamily. RNA methyltransferase RsmG family.

It localises to the cytoplasm. Specifically methylates the N7 position of a guanine in 16S rRNA. This Borrelia hermsii (strain HS1 / DAH) protein is Ribosomal RNA small subunit methyltransferase G.